The sequence spans 241 residues: MSVCMPQKRYYRQRAHSNPMADHTFQYPVCPEQMDWSPLYPQYFPQQEEAGGAQVEFADIGCGYGGLLVQLSQLFPQQLILGLEIRVKVSDYVQDRIRSLRVAEPGRYQNIACLRSNAMKYLPNFFRKGQLSKMFFLFPDPHFKKTKHKWRIISPTLLAEYAYTLRIGGLVYTNTDVEEVHEWIVQHFSDHPLFSRVTEEQLADDIIVGHLGTCTEEGKKVQRNGGKNFLAVFRRVEDPQT.

Residues Gly61, Glu84, Arg86, Asn117, Ala118, and Leu137 each coordinate S-adenosyl-L-methionine. The active site involves Asp140. The segment at 141–149 is alphaC helix; the sequence is PHFKKTKHK. S-adenosyl-L-methionine contacts are provided by Thr215 and Glu217. Residues 215–223 form an alpha6 helix region; sequence TEEGKKVQR.

It belongs to the class I-like SAM-binding methyltransferase superfamily. TrmB family. Catalytic component of the METTL1-WDR4 complex, composed of mettl1 and wdr4.

The protein localises to the nucleus. It catalyses the reaction guanosine(46) in tRNA + S-adenosyl-L-methionine = N(7)-methylguanosine(46) in tRNA + S-adenosyl-L-homocysteine. The catalysed reaction is a guanosine in mRNA + S-adenosyl-L-methionine = an N(7)-methylguanosine in mRNA + S-adenosyl-L-homocysteine. It carries out the reaction a guanosine in miRNA + S-adenosyl-L-methionine = an N(7)-methylguanosine in miRNA + S-adenosyl-L-homocysteine. The protein operates within tRNA modification; N(7)-methylguanine-tRNA biosynthesis. Catalytic component of METTL1-WDR4 methyltransferase complex that mediates the formation of N(7)-methylguanine in a subset of RNA species, such as tRNAs, mRNAs and microRNAs (miRNAs). Catalyzes the formation of N(7)-methylguanine at position 46 (m7G46) in a large subset of tRNAs that contain the 5'-RAGGU-3' motif within the variable loop. M7G46 interacts with C13-G22 in the D-loop to stabilize tRNA tertiary structure and protect tRNAs from decay. Also acts as a methyltransferase for a subset of internal N(7)-methylguanine in mRNAs. Internal N(7)-methylguanine methylation of mRNAs in response to stress promotes their relocalization to stress granules, thereby suppressing their translation. Also methylates a specific subset of miRNAs. The sequence is that of tRNA (guanine-N(7)-)-methyltransferase (mettl1) from Danio rerio (Zebrafish).